Reading from the N-terminus, the 533-residue chain is Flavin-dependent halogenase gsfI (533 aa).

Gly-14, Gly-17, and Glu-47 together coordinate FAD. Ser-331 and Gly-332 together coordinate chloride.

It belongs to the flavin-dependent halogenase family.

It carries out the reaction griseophenone C + FADH2 + chloride + O2 = griseophenone B + FAD + 2 H2O + H(+). Its pathway is secondary metabolite biosynthesis; terpenoid biosynthesis. Its function is as follows. Flavin-dependent halogenase; part of the gene cluster that mediates the biosynthesis of griseofulvin, an important antifungal drug that has been in use for a long time for treating dermatophyte infections. The first step of the pathway is the formation of the heptaketide backbone by gsfA which is initiated by priming with acetyl-CoA, followed by sequential condensations of 6 malonyl-CoA units. The resulting benzophenone can undergo a spontaneous dehydration to form norlichexanthone. However, the true precursor for the griseofulvin biosynthesis is not norlichexanthone, but the heptaketide benzophenone that is O-methylated at 3-OH by gsfB to produce griseophenone D which is further methylated at 9-OH by gsfC to yield griseophenone C. Griseophenone C is then substrate of halogenase gsfI which is responsible for the regio-specific chlorination at the C13 position to form griseophenone B. The cytochrome P450 gsfF catalyzes the coupling of orcinol and phloroglucinol rings in griseophenone B to form desmethyl-dehydrogriseofulvin A which is further methylated at 5-OH by gsfD to yield dehydrogriseofulvin. Finally, gsfE performs stereospecific reduction of enone 18 of dehydrogriseofulvin to afford the final product griseofulvin. The sequence is that of Flavin-dependent halogenase gsfI from Penicillium aethiopicum.